We begin with the raw amino-acid sequence, 251 residues long: Ribosome maturation factor RimP (251 aa).

Positions 198–251 (NLGLEPPAAPHAKISEKTTKNTKPKKKPAPTNTKKHRLAAERARRGEIEPDEGD) are disordered. The segment covering 217–234 (KNTKPKKKPAPTNTKKHR) has biased composition (basic residues). Residues 235 to 245 (LAAERARRGEI) are compositionally biased toward basic and acidic residues.

The protein belongs to the RimP family.

The protein localises to the cytoplasm. Its function is as follows. Required for maturation of 30S ribosomal subunits. The sequence is that of Ribosome maturation factor RimP from Bradyrhizobium diazoefficiens (strain JCM 10833 / BCRC 13528 / IAM 13628 / NBRC 14792 / USDA 110).